The primary structure comprises 276 residues: Formamidopyrimidine-DNA glycosylase (276 aa).

P2 (schiff-base intermediate with DNA) is an active-site residue. E3 acts as the Proton donor in catalysis. The active-site Proton donor; for beta-elimination activity is K60. 3 residues coordinate DNA: H93, R112, and R155. The segment at 240 to 274 adopts an FPG-type zinc-finger fold; the sequence is LVYGRKDEACTKCGAEIIRFVVGGRGTHICPDCQK. Residue R264 is the Proton donor; for delta-elimination activity of the active site.

This sequence belongs to the FPG family. Monomer. Requires Zn(2+) as cofactor.

The enzyme catalyses Hydrolysis of DNA containing ring-opened 7-methylguanine residues, releasing 2,6-diamino-4-hydroxy-5-(N-methyl)formamidopyrimidine.. It catalyses the reaction 2'-deoxyribonucleotide-(2'-deoxyribose 5'-phosphate)-2'-deoxyribonucleotide-DNA = a 3'-end 2'-deoxyribonucleotide-(2,3-dehydro-2,3-deoxyribose 5'-phosphate)-DNA + a 5'-end 5'-phospho-2'-deoxyribonucleoside-DNA + H(+). In terms of biological role, involved in base excision repair of DNA damaged by oxidation or by mutagenic agents. Acts as a DNA glycosylase that recognizes and removes damaged bases. Has a preference for oxidized purines, such as 7,8-dihydro-8-oxoguanine (8-oxoG). Has AP (apurinic/apyrimidinic) lyase activity and introduces nicks in the DNA strand. Cleaves the DNA backbone by beta-delta elimination to generate a single-strand break at the site of the removed base with both 3'- and 5'-phosphates. This Brevibacillus brevis (strain 47 / JCM 6285 / NBRC 100599) protein is Formamidopyrimidine-DNA glycosylase.